A 429-amino-acid polypeptide reads, in one-letter code: 26S proteasome regulatory subunit RPN7 (429 aa).

2 positions are modified to phosphoserine: Ser8 and Ser77. A TPR repeat occupies 131–164 (AQAWINLGEYYAQIGDKDNAEKTLGKSLSKAIST). The 173-residue stretch at 223 to 395 (NFKEAAKLLV…GIVETNRPDN (173 aa)) folds into the PCI domain.

The 26S proteasome is composed of a core protease, known as the 20S proteasome, capped at one or both ends by the 19S regulatory complex (RC). The RC is composed of at least 18 different subunits in two subcomplexes, the base and the lid, which form the portions proximal and distal to the 20S proteolytic core, respectively. Component of the lid subcomplex of the 19S RC.

The protein localises to the nucleus. Functionally, component of the 19S cap proteasome complex which acts as a regulatory subunit of the 26S proteasome, involved in the ATP-dependent degradation of ubiquitinated proteins. The chain is 26S proteasome regulatory subunit RPN7 from Saccharomyces cerevisiae (strain ATCC 204508 / S288c) (Baker's yeast).